A 357-amino-acid chain; its full sequence is S-adenosylmethionine decarboxylase proenzyme (357 aa).

Active-site residues include Glu11 and Glu14. Residue Ser71 is the Schiff-base intermediate with substrate; via pyruvic acid of the active site. Residue Ser71 is modified to Pyruvic acid (Ser); by autocatalysis. Cys85 acts as the Proton donor; for catalytic activity in catalysis. Active-site proton acceptor; for processing activity residues include Ser234 and His247.

It belongs to the eukaryotic AdoMetDC family. It depends on pyruvate as a cofactor. In terms of processing, is synthesized initially as an inactive proenzyme. Formation of the active enzyme involves a self-maturation process in which the active site pyruvoyl group is generated from an internal serine residue via an autocatalytic post-translational modification. Two non-identical subunits are generated from the proenzyme in this reaction, and the pyruvate is formed at the N-terminus of the alpha chain, which is derived from the carboxyl end of the proenzyme. The post-translation cleavage follows an unusual pathway, termed non-hydrolytic serinolysis, in which the side chain hydroxyl group of the serine supplies its oxygen atom to form the C-terminus of the beta chain, while the remainder of the serine residue undergoes an oxidative deamination to produce ammonia and the pyruvoyl group blocking the N-terminus of the alpha chain.

It carries out the reaction S-adenosyl-L-methionine + H(+) = S-adenosyl 3-(methylsulfanyl)propylamine + CO2. Its pathway is amine and polyamine biosynthesis; S-adenosylmethioninamine biosynthesis; S-adenosylmethioninamine from S-adenosyl-L-methionine: step 1/1. This Catharanthus roseus (Madagascar periwinkle) protein is S-adenosylmethionine decarboxylase proenzyme (SAMDC).